The following is a 741-amino-acid chain: Phosphoribosylformylglycinamidine synthase subunit PurL (741 aa).

His53 is a catalytic residue. Tyr56 and Lys95 together coordinate ATP. Glu97 provides a ligand contact to Mg(2+). Substrate-binding positions include 98-101 (SHNH) and Arg120. Residue His99 is the Proton acceptor of the active site. Asp121 contacts Mg(2+). Gln244 is a substrate binding site. Mg(2+) is bound at residue Asp274. 318–320 (ESQ) contacts substrate. The ATP site is built by Asp501 and Gly538. Asn539 is a binding site for Mg(2+). Residue Ser541 participates in substrate binding.

The protein belongs to the FGAMS family. As to quaternary structure, monomer. Part of the FGAM synthase complex composed of 1 PurL, 1 PurQ and 2 PurS subunits.

The protein resides in the cytoplasm. The catalysed reaction is N(2)-formyl-N(1)-(5-phospho-beta-D-ribosyl)glycinamide + L-glutamine + ATP + H2O = 2-formamido-N(1)-(5-O-phospho-beta-D-ribosyl)acetamidine + L-glutamate + ADP + phosphate + H(+). The protein operates within purine metabolism; IMP biosynthesis via de novo pathway; 5-amino-1-(5-phospho-D-ribosyl)imidazole from N(2)-formyl-N(1)-(5-phospho-D-ribosyl)glycinamide: step 1/2. Its function is as follows. Part of the phosphoribosylformylglycinamidine synthase complex involved in the purines biosynthetic pathway. Catalyzes the ATP-dependent conversion of formylglycinamide ribonucleotide (FGAR) and glutamine to yield formylglycinamidine ribonucleotide (FGAM) and glutamate. The FGAM synthase complex is composed of three subunits. PurQ produces an ammonia molecule by converting glutamine to glutamate. PurL transfers the ammonia molecule to FGAR to form FGAM in an ATP-dependent manner. PurS interacts with PurQ and PurL and is thought to assist in the transfer of the ammonia molecule from PurQ to PurL. This Limosilactobacillus fermentum (strain NBRC 3956 / LMG 18251) (Lactobacillus fermentum) protein is Phosphoribosylformylglycinamidine synthase subunit PurL.